The sequence spans 224 residues: Peptidyl-prolyl cis-trans isomerase FKBP3 (224 aa).

The residue at position 2 (alanine 2) is an N-acetylalanine. Serine 36 is modified (phosphoserine). A disordered region spans residues asparagine 87–glycine 119. Over residues lysine 89–glutamate 102 the composition is skewed to basic and acidic residues. Lysine 99 carries the N6-acetyllysine modification. The 97-residue stretch at glycine 128–aspartate 224 folds into the PPIase FKBP-type domain. Serine 152 is subject to Phosphoserine. Residue lysine 170 is modified to N6-acetyllysine.

It belongs to the FKBP-type PPIase family.

Its subcellular location is the nucleus. The enzyme catalyses [protein]-peptidylproline (omega=180) = [protein]-peptidylproline (omega=0). With respect to regulation, inhibited preferentially by rapamycin over FK506. Functionally, FK506- and rapamycin-binding proteins (FKBPs) constitute a family of receptors for the two immunosuppressants which inhibit T-cell proliferation by arresting two distinct cytoplasmic signal transmission pathways. PPIases accelerate the folding of proteins. The protein is Peptidyl-prolyl cis-trans isomerase FKBP3 (FKBP3) of Oryctolagus cuniculus (Rabbit).